The sequence spans 878 residues: Serine/threonine-protein kinase D2 (878 aa).

Over residues 1–12 (MATAPSYPAGLP) the composition is skewed to low complexity. Positions 1 to 35 (MATAPSYPAGLPGSPGPGSPPPPGGLELQSPPPLL) are disordered. The segment covering 14–35 (SPGPGSPPPPGGLELQSPPPLL) has biased composition (pro residues). A Phosphoserine modification is found at Ser-30. Tyr-87 bears the Phosphotyrosine mark. The Phorbol-ester/DAG-type 1 zinc finger occupies 138 to 188 (PHALTVHSYRAPAFCDHCGEMLFGLVRQGLKCDGCGLNYHKRCAFSIPNNC). Residues Ser-197, Ser-198, Ser-200, Ser-203, Ser-206, Ser-212, and Ser-214 each carry the phosphoserine modification. Residues 224–247 (RSTTELLPRRPPSSSSSSSASSYT) form a disordered region. Residues 236–245 (SSSSSSSASS) are compositionally biased toward low complexity. Ser-244 is subject to Phosphoserine; by CSNK1D and CSNK1E. The segment at 264 to 314 (PHTFLIHSYTRPTVCQACKKLLKGLFRQGLQCKDCKFNCHKRCATRVPNDC) adopts a Phorbol-ester/DAG-type 2 zinc-finger fold. The interval 343-373 (ESEDSGVIPGSHSENALHASEEEEGEGGKAQ) is disordered. One can recognise a PH domain in the interval 397-509 (TTLREGWVVH…WETAIRQALM (113 aa)). Tyr-407 is modified (phosphotyrosine). Tyr-438 bears the Phosphotyrosine; by ABL1 mark. Ser-518 carries the phosphoserine modification. The Protein kinase domain maps to 551 to 807 (IFPDEVLGSG…VDKSLSHPWL (257 aa)). ATP is bound by residues 557–565 (LGSGQFGVV) and Lys-580. The Proton acceptor role is filled by Asp-674. At Ser-706 the chain carries Phosphoserine; by PKC. Phosphoserine is present on Ser-710. Phosphotyrosine; by ABL1 is present on Tyr-717. Positions 724-726 (LNQ) match the Important for ABL1-mediated Tyr-717 phosphorylation motif. The interval 844-869 (HPLPGSGLPTDRDLGGACPPQDHDMQ) is disordered. Ser-876 carries the phosphoserine; by autocatalysis modification.

The protein belongs to the protein kinase superfamily. CAMK Ser/Thr protein kinase family. PKD subfamily. As to quaternary structure, interacts (via C-terminus) with LCK. Interacts (via N-terminal AP-rich region) with CIB1 isoform 2. Interacts (via N-terminus and zing-finger domain 1 and 2) with PRKCD in response to oxidative stress; the interaction is independent of PRKD2 tyrosine phosphorylation. Mg(2+) is required as a cofactor. Phosphorylation of Ser-876 correlates with the activation status of the kinase. Ser-706 or/and Ser-710 are probably phosphorylated by PKC. Phosphorylation at Ser-244 by CSNK1D and CSNK1E promotes nuclear localization and substrate targeting. Phosphorylation at Ser-244, Ser-706 and Ser-710 is required for nuclear localization. Phosphorylated at Tyr-438 by ABL1 in response to oxidative stress. Phosphorylated at Tyr-717 by ABL1 specifically in response to oxidative stress; requires prior phosphorylation at Ser-706 or/and Ser-710. As to expression, widely expressed.

It is found in the cytoplasm. The protein resides in the cell membrane. Its subcellular location is the nucleus. The protein localises to the golgi apparatus. It localises to the trans-Golgi network. It catalyses the reaction L-seryl-[protein] + ATP = O-phospho-L-seryl-[protein] + ADP + H(+). The catalysed reaction is L-threonyl-[protein] + ATP = O-phospho-L-threonyl-[protein] + ADP + H(+). Its activity is regulated as follows. Activated by DAG and phorbol esters. Phorbol-ester/DAG-type domains bind DAG, mediating translocation to membranes. Autophosphorylation of Ser-710 and phosphorylation of Ser-706 by PKC relieves auto-inhibition by the PH domain. Catalytic activity is further increased by phosphorylation at Tyr-717 in response to oxidative stress. Its function is as follows. Serine/threonine-protein kinase that converts transient diacylglycerol (DAG) signals into prolonged physiological effects downstream of PKC, and is involved in the regulation of cell proliferation via MAPK1/3 (ERK1/2) signaling, oxidative stress-induced NF-kappa-B activation, inhibition of HDAC7 transcriptional repression, signaling downstream of T-cell antigen receptor (TCR) and cytokine production, and plays a role in Golgi membrane trafficking, angiogenesis, secretory granule release and cell adhesion. May potentiate mitogenesis induced by the neuropeptide bombesin by mediating an increase in the duration of MAPK1/3 (ERK1/2) signaling, which leads to accumulation of immediate-early gene products including FOS that stimulate cell cycle progression. In response to oxidative stress, is phosphorylated at Tyr-438 and Tyr-717 by ABL1, which leads to the activation of PRKD2 without increasing its catalytic activity, and mediates activation of NF-kappa-B. In response to the activation of the gastrin receptor CCKBR, is phosphorylated at Ser-244 by CSNK1D and CSNK1E, translocates to the nucleus, phosphorylates HDAC7, leading to nuclear export of HDAC7 and inhibition of HDAC7 transcriptional repression of NR4A1/NUR77. Upon TCR stimulation, is activated independently of ZAP70, translocates from the cytoplasm to the nucleus and is required for interleukin-2 (IL2) promoter up-regulation. During adaptive immune responses, is required in peripheral T-lymphocytes for the production of the effector cytokines IL2 and IFNG after TCR engagement and for optimal induction of antibody responses to antigens. In epithelial cells stimulated with lysophosphatidic acid (LPA), is activated through a PKC-dependent pathway and mediates LPA-stimulated interleukin-8 (IL8) secretion via a NF-kappa-B-dependent pathway. During TCR-induced T-cell activation, interacts with and is activated by the tyrosine kinase LCK, which results in the activation of the NFAT transcription factors. In the trans-Golgi network (TGN), regulates the fission of transport vesicles that are on their way to the plasma membrane and in polarized cells is involved in the transport of proteins from the TGN to the basolateral membrane. Plays an important role in endothelial cell proliferation and migration prior to angiogenesis, partly through modulation of the expression of KDR/VEGFR2 and FGFR1, two key growth factor receptors involved in angiogenesis. In secretory pathway, is required for the release of chromogranin-A (CHGA)-containing secretory granules from the TGN. Downstream of PRKCA, plays important roles in angiotensin-2-induced monocyte adhesion to endothelial cells. Plays a regulatory role in angiogenesis and tumor growth by phosphorylating a downstream mediator CIB1 isoform 2, resulting in vascular endothelial growth factor A (VEGFA) secretion. The protein is Serine/threonine-protein kinase D2 (PRKD2) of Homo sapiens (Human).